The following is a 354-amino-acid chain: 3'-5' exonuclease (354 aa).

Positions 1–120 are disordered; that stretch reads MEKYLIKMPI…PSPEKEKPEK (120 aa). A compositionally biased stretch (basic and acidic residues) spans 36-50; it reads TKKDTPKELKDKENA. Positions 59–70 are enriched in basic residues; sequence TKGRPGRPAVKR. The span at 71–91 shows a compositional bias: basic and acidic residues; the sequence is KNLDNPDAKAEKKATEEENPP. A phosphoserine mark is found at serine 104, serine 110, and serine 112. One can recognise a 3'-5' exonuclease domain in the interval 146–314; that stretch reads VLQWVEKQKD…GQVIYRELER (169 aa). Residues aspartate 163, glutamate 165, and aspartate 301 each contribute to the Mg(2+) site.

Belongs to the WRNexo family.

Its subcellular location is the nucleus. Has exonuclease activity on both single-stranded and duplex templates bearing overhangs, but not blunt ended duplex DNA, and cleaves in a 3'-5' direction. Essential for the formation of DNA replication focal centers. Has an important role in maintaining genome stability. This chain is 3'-5' exonuclease, found in Drosophila yakuba (Fruit fly).